Consider the following 290-residue polypeptide: Endonuclease 2 (290 aa).

An N-terminal signal peptide occupies residues 1 to 27 (MANQKGLHVVMMIITVWLLYAAPNIHG). Residues Trp28 and His33 each contribute to the a divalent metal cation site. Residue 28-33 (WGKEGH) coordinates substrate. A disulfide bridge connects residues Cys37 and Cys68. A divalent metal cation-binding residues include Asp72 and His85. Residues 72–76 (DRVKF), 85–88 (HYIN), and 94–99 (SYQYNR) contribute to the substrate site. 3 cysteine pairs are disulfide-bonded: Cys93–Cys245, Cys101–Cys111, and Cys226–Cys232. Asn118 and Tyr136 together coordinate substrate. The N-linked (GlcNAc...) asparagine glycan is linked to Asn118. The N-linked (GlcNAc...) asparagine glycan is linked to Asn137. Positions 147, 151, 157, 181, and 185 each coordinate a divalent metal cation. Residues 147 to 196 (HFMGDIHQPLHVSYASDKGGNTIEVHWYTRKANLHHIWDSNIIETAEADL) are substrate binding. Asn211 carries an N-linked (GlcNAc...) asparagine glycan. A propeptide spans 283–290 (ATLNRIFG) (removed in mature form).

This sequence belongs to the nuclease type I family. In terms of assembly, monomer. Requires Mn(2+) as cofactor. Ca(2+) serves as cofactor. Zn(2+) is required as a cofactor. Post-translationally, N-glycosylation is required for enzymatic stability and activity.

The enzyme catalyses Endonucleolytic cleavage to 5'-phosphomononucleotide and 5'-phosphooligonucleotide end-products.. Its activity is regulated as follows. ssDNase activity is inhibited by the divalent cation chelator EDTA and the reducing agent DTT. Divalent metal ions (e.g. Ca(2+), Mg(2+) and Zn(2+)) and DTT represses RNase activity. RNase activity is enhanced by EDTA. Also repressed by vanadate (VO(4)(3-)) and phosphate (PO(4)(3-)) by occupying the active site. Endonuclease mostly active on RNA and ssDNA, and to a lower extent, on dsDNA. Can cleave mismatch regions in heteroduplex DNA containing single base pair mismatches or insertion/deletion bases. In contradiction with PubMed:22506810, cannot hydrolyze single-stranded DNA and does not cleave mismatches. The sequence is that of Endonuclease 2 from Arabidopsis thaliana (Mouse-ear cress).